The chain runs to 146 residues: MIIKIHNQTSFCIKPFKSLLIKMFLPIKEKKIMHLIFVTNEKIQELNSFYRQKNYPTDVLSFHNDLTFFAGLEDNSLGDVFISFPKAQEQAKTFKHSLEREIAFLAVHGFLHLKGYQHRTEEEFQIMLALQEKILQKVGLNLDKTK.

Zn(2+)-binding residues include histidine 108, histidine 112, and histidine 118.

This sequence belongs to the endoribonuclease YbeY family. Requires Zn(2+) as cofactor.

The protein localises to the cytoplasm. In terms of biological role, single strand-specific metallo-endoribonuclease involved in late-stage 70S ribosome quality control and in maturation of the 3' terminus of the 16S rRNA. This chain is Endoribonuclease YbeY, found in Aster yellows witches'-broom phytoplasma (strain AYWB).